We begin with the raw amino-acid sequence, 112 residues long: Putative pterin-4-alpha-carbinolamine dehydratase (112 aa).

Belongs to the pterin-4-alpha-carbinolamine dehydratase family.

The catalysed reaction is (4aS,6R)-4a-hydroxy-L-erythro-5,6,7,8-tetrahydrobiopterin = (6R)-L-erythro-6,7-dihydrobiopterin + H2O. The polypeptide is Putative pterin-4-alpha-carbinolamine dehydratase (Shewanella baltica (strain OS155 / ATCC BAA-1091)).